Reading from the N-terminus, the 219-residue chain is Ribosomal RNA small subunit methyltransferase G (219 aa).

Residues G85, L90, 136-137, and R151 contribute to the S-adenosyl-L-methionine site; that span reads VE.

Belongs to the methyltransferase superfamily. RNA methyltransferase RsmG family.

It localises to the cytoplasm. It carries out the reaction guanosine(527) in 16S rRNA + S-adenosyl-L-methionine = N(7)-methylguanosine(527) in 16S rRNA + S-adenosyl-L-homocysteine. Functionally, specifically methylates the N7 position of guanine in position 527 of 16S rRNA. The chain is Ribosomal RNA small subunit methyltransferase G from Cellvibrio japonicus (strain Ueda107) (Pseudomonas fluorescens subsp. cellulosa).